The following is a 30-amino-acid chain: Methanobactin mb-OB3b (30 aa).

A propeptide spanning residues 1–19 is cleaved from the precursor; that stretch reads MTVKIAQKKVLPVIGRAAA. A cross-link (2-(3-methylbutanoyl)-5-hydroxyoxazole-4-carbothionic acid (Leu-Cys)) is located at residues 20–21; it reads LC. Cu(2+) contacts are provided by Cys21 and Cys27. A disulfide bridge links Cys24 with Cys29. The segment at residues 26 to 27 is a cross-link (proline 5-hydroxy-oxazole-4-carbothionic acid (Pro-Cys)); that stretch reads PC.

As to quaternary structure, monomer. In the absence of copper, may exist as a dimer or an oligomer.

Its subcellular location is the secreted. The protein localises to the cytoplasm. The catalysed reaction is 2 superoxide + 2 H(+) = H2O2 + O2. Its function is as follows. Chalkophore involved in scavenging, uptake and suppression of toxicity of copper. Each apo-methanobactin (apo-mb) complexes 1 Cu(2+) or Cu(1+) ion to form Cu(1+)-mb (Cu-mb) which is then taken up by the cell. Enhances growth rate in the presence of copper and reduces growth lag upon exposition to elevated levels of copper. Cu-mb contributes to the switchover from soluble methane monooxygenase (sMMO) to the membrane-bound particulate MMO (pMMO) by inducing transcription of pMMO subunit A. It also stimulates the enzymatic activity of pMMO. In the absence of copper, binds other metal ions, like Zn(2+), Ag(1+), Au(3+), Co(2+), Cd(2+), Fe(3+), Hg(2+), Mn(2+), Ni(2+), Pb(2+) or U(6+), but not Ba(2+), Ca(2+), La(2+), Mg(2+) or Sr(2+). Uptake is an active process, which may involve TonB-dependent transporters, and as such does not involve porins. Cu-Mb can be taken up by other methanotrophic bacteria but not by E.coli. Has Cu-dependent superoxide dismutase-like activity. Shows reductant-dependent oxidase and hydrogen peroxide reductase activities. Reduces copper-levels in liver in a rat model of Wilson disease. The polypeptide is Methanobactin mb-OB3b (Methylosinus trichosporium).